Consider the following 380-residue polypeptide: L-lactate dehydrogenase (380 aa).

Residues 1 to 380 (MIISASTDYR…SADSLVQGLR (380 aa)) enclose the FMN hydroxy acid dehydrogenase domain. Tyrosine 24 is a substrate binding site. FMN is bound by residues serine 106 and glutamine 127. Tyrosine 129 lines the substrate pocket. Threonine 155 provides a ligand contact to FMN. Arginine 164 serves as a coordination point for substrate. Residue lysine 251 participates in FMN binding. The active-site Proton acceptor is the histidine 275. A substrate-binding site is contributed by arginine 278. An FMN-binding site is contributed by 306–330 (DSGIRSGLDVVRMIALGADGVLLGR).

It belongs to the FMN-dependent alpha-hydroxy acid dehydrogenase family. FMN is required as a cofactor.

It localises to the cell inner membrane. It catalyses the reaction (S)-lactate + A = pyruvate + AH2. Catalyzes the conversion of L-lactate to pyruvate. Is coupled to the respiratory chain. This chain is L-lactate dehydrogenase, found in Serratia proteamaculans (strain 568).